The chain runs to 727 residues: Sodium-dependent neutral amino acid transporter SLC6A17 (727 aa).

At 1–68 (MPKNSKVTQR…DRPAWNSKLQ (68 aa)) the chain is on the cytoplasmic side. Ser13 and Ser20 each carry phosphoserine. A helical transmembrane segment spans residues 69 to 89 (YILAQIGFSVGLGNIWRFPYL). The Extracellular segment spans residues 90-96 (CQKNGGG). The chain crosses the membrane as a helical span at residues 97-116 (AYLVPYLVLLIIIGIPLFFL). Residues 117–140 (ELAVGQRIRRGSIGVWHYVCPRLG) lie on the Cytoplasmic side of the membrane. A helical transmembrane segment spans residues 141–161 (GIGFSSCIVCLFVGLYYNVII). The Extracellular portion of the chain corresponds to 162 to 224 (GWSVFYFFKS…NSISESGGLN (63 aa)). Asn186 carries an N-linked (GlcNAc...) asparagine glycan. A helical membrane pass occupies residues 225–243 (WKMTVCLLVAWSIVGMAVV). Residues 244–251 (KGIQSSGK) lie on the Cytoplasmic side of the membrane. Residues 252–269 (VMYFSSLFPYVVLACFLV) traverse the membrane as a helical segment. At 270–304 (RGLLLRGAVDGILHMFTPKLDKMLDPQVWREAATQ) the chain is on the extracellular side. Residues 305-322 (VFFALGLGFGGVIAFSSY) form a helical membrane-spanning segment. Topologically, residues 323–333 (NKQDNNCHFDA) are cytoplasmic. The helical transmembrane segment at 334–355 (ALVSFINFFTSVLATLVVFAVL) threads the bilayer. The Extracellular segment spans residues 356–451 (GFKANIMNEK…FIAFTEAMTH (96 aa)). Tyr377 carries the phosphotyrosine modification. Asn393 carries N-linked (GlcNAc...) asparagine glycosylation. Residues 452–471 (FPASPFWSVMFFLMLINLGL) form a helical membrane-spanning segment. The Cytoplasmic segment spans residues 472–494 (GSMIGTMAGITTPIIDTFKVPKE). Residues 495 to 513 (MFTVGCCVFAFFVGLLFVQ) form a helical membrane-spanning segment. Residues 514 to 528 (RSGNYFVTMFDDYSA) lie on the Extracellular side of the membrane. A helical transmembrane segment spans residues 529 to 549 (TLPLTVIVILENIAVAWIYGT). The Cytoplasmic portion of the chain corresponds to 550-569 (KKFMQELTEMLGFRPYRFYF). The helical transmembrane segment at 570–591 (YMWKFVSPLCMAVLTTASIIQL) threads the bilayer. Topologically, residues 592-618 (GVSPPGYSAWIKEEAAERYLYFPNWAM) are extracellular. Residues 619 to 641 (ALLITLIAVATLPIPVVFILRHF) traverse the membrane as a helical segment. Residues 642–727 (HLLSDGSNTL…LLASTPESEL (86 aa)) lie on the Cytoplasmic side of the membrane. A phosphoserine mark is found at Ser665 and Ser701. The segment at 680-727 (VPSEAPSPMPTHRSYLGPGSTSPLESSSHPNGRYGSGYLLASTPESEL) is disordered. Positions 698–709 (GSTSPLESSSHP) are enriched in polar residues.

It belongs to the sodium:neurotransmitter symporter (SNF) (TC 2.A.22) family. In terms of tissue distribution, found exclusively in the central nervous system and is more abundant in the cerebellum and the cerebral cortex. Expressed in PC-12 cell line.

The protein resides in the cytoplasmic vesicle. The protein localises to the secretory vesicle. It is found in the synaptic vesicle membrane. It localises to the postsynapse. Its subcellular location is the presynapse. It catalyses the reaction L-proline(in) + Na(+)(in) = L-proline(out) + Na(+)(out). The catalysed reaction is L-leucine(in) + Na(+)(in) = L-leucine(out) + Na(+)(out). It carries out the reaction glycine(in) + Na(+)(in) = glycine(out) + Na(+)(out). The enzyme catalyses L-alanine(in) + Na(+)(in) = L-alanine(out) + Na(+)(out). It catalyses the reaction L-glutamine(in) + Na(+)(in) = L-glutamine(out) + Na(+)(out). Synaptic vesicle transporter with apparent selectivity for neutral amino acids. The transport is sodium-coupled but chloride-independent, likely driven by the proton electrochemical gradient generated by vacuolar H(+)-ATPase in an overall electrogenic mechanism. May contribute to the synaptic uptake of neurotransmitter precursors in a process coupled in part to vesicle exocytosis. The sequence is that of Sodium-dependent neutral amino acid transporter SLC6A17 from Rattus norvegicus (Rat).